The following is a 379-amino-acid chain: Nematocin receptor 1 (379 aa).

At 19–48 the chain is on the extracellular side; that stretch reads HNLYLFQMLELQENITDSQPMDPPSLEIMM. A glycan (N-linked (GlcNAc...) asparagine) is linked at asparagine 32. The chain crosses the membrane as a helical span at residues 49–69; the sequence is LHHLMIILVTLFGNTLLIYVI. At 70-95 the chain is on the cytoplasmic side; the sequence is YKNNAVLRRKRVTPVQMLMLHMCAAD. The chain crosses the membrane as a helical span at residues 96-116; it reads ILFALISVGPTMAITATVPFF. The Extracellular portion of the chain corresponds to 117–124; it reads YGPNLLCK. Cysteine 123 and cysteine 196 are oxidised to a cystine. The helical transmembrane segment at 125 to 145 threads the bilayer; sequence LTKFLQVIPMYASSFLLVAIS. At 146–168 the chain is on the cytoplasmic side; sequence ADRYQAICRPLASMKSSIYNRPA. A helical transmembrane segment spans residues 169–189; sequence LYSGIAWTAAILFSTPQLYLF. The Extracellular segment spans residues 190–207; sequence EKRNGDCSENYTTALQYQ. N-linked (GlcNAc...) asparagine glycosylation is present at asparagine 199. The chain crosses the membrane as a helical span at residues 208–228; that stretch reads LYVCLFNSVVWLLPSAIAGWL. Residues 229–289 lie on the Cytoplasmic side of the membrane; sequence YLCVCKAVWK…DRRRVQTVKL (61 aa). A helical transmembrane segment spans residues 290–310; sequence TLTIVAANFVLWAPFCITSVI. Over 311-320 the chain is Extracellular; it reads DAVWPTAINS. Asparagine 319 carries N-linked (GlcNAc...) asparagine glycosylation. A helical transmembrane segment spans residues 321–343; that stretch reads TFATYIMFFGNLNSCMNPWLWFH. Topologically, residues 344 to 379 are cytoplasmic; it reads FNRKQLKRACPCRKSSEPLIQSLVYVHVMTSEQSDF.

Belongs to the G-protein coupled receptor 1 family. Vasopressin/oxytocin receptor subfamily. As to expression, detected in the left ASE gustatory neuron, the chemosensory neuron pairs ASH and ADF, and the PQR tail neuron. In males, detected in hook and tail sensory neurons involved in vulval sensing and hermaphrodite contact, and in spicule protractor muscles.

It localises to the cell membrane. In terms of biological role, receptor for nematocin. The activity of this receptor is mediated by G proteins which activate a phosphatidylinositol-calcium second messenger system. The activity of this receptor may be modulated by ntr-2, leading to reduced intracellular cAMP production. Plays a role in gustatory associative learning. Also plays a role in male mating behavior. The protein is Nematocin receptor 1 of Caenorhabditis elegans.